A 361-amino-acid chain; its full sequence is Mannonate dehydratase 1 (361 aa).

It belongs to the mannonate dehydratase family. The cofactor is Fe(2+). Mn(2+) is required as a cofactor.

It catalyses the reaction D-mannonate = 2-dehydro-3-deoxy-D-gluconate + H2O. It participates in carbohydrate metabolism; pentose and glucuronate interconversion. Catalyzes the dehydration of D-mannonate. This chain is Mannonate dehydratase 1 (uxuA1), found in Halalkalibacterium halodurans (strain ATCC BAA-125 / DSM 18197 / FERM 7344 / JCM 9153 / C-125) (Bacillus halodurans).